The sequence spans 385 residues: 8-amino-7-oxononanoate synthase (385 aa).

Residue Arg27 coordinates substrate. 105–106 (GY) provides a ligand contact to pyridoxal 5'-phosphate. His130 contacts substrate. Residues Ser176, 201 to 204 (DEAH), and 232 to 235 (TMSK) contribute to the pyridoxal 5'-phosphate site. Position 235 is an N6-(pyridoxal phosphate)lysine (Lys235). Thr345 contributes to the substrate binding site.

The protein belongs to the class-II pyridoxal-phosphate-dependent aminotransferase family. BioF subfamily. As to quaternary structure, homodimer. Pyridoxal 5'-phosphate is required as a cofactor.

The enzyme catalyses 6-carboxyhexanoyl-[ACP] + L-alanine + H(+) = (8S)-8-amino-7-oxononanoate + holo-[ACP] + CO2. The protein operates within cofactor biosynthesis; biotin biosynthesis. Functionally, catalyzes the decarboxylative condensation of pimeloyl-[acyl-carrier protein] and L-alanine to produce 8-amino-7-oxononanoate (AON), [acyl-carrier protein], and carbon dioxide. The chain is 8-amino-7-oxononanoate synthase from Mycobacterium leprae (strain Br4923).